A 155-amino-acid chain; its full sequence is Ribosomal RNA large subunit methyltransferase H (155 aa).

S-adenosyl-L-methionine-binding positions include Leu-72, Gly-104, and 123–128; that span reads LSRMTF.

The protein belongs to the RNA methyltransferase RlmH family. In terms of assembly, homodimer.

It localises to the cytoplasm. It carries out the reaction pseudouridine(1915) in 23S rRNA + S-adenosyl-L-methionine = N(3)-methylpseudouridine(1915) in 23S rRNA + S-adenosyl-L-homocysteine + H(+). Functionally, specifically methylates the pseudouridine at position 1915 (m3Psi1915) in 23S rRNA. The protein is Ribosomal RNA large subunit methyltransferase H of Kosmotoga olearia (strain ATCC BAA-1733 / DSM 21960 / TBF 19.5.1).